A 494-amino-acid polypeptide reads, in one-letter code: Rhamnulokinase (494 aa).

Position 18–22 (18–22 (ASSGR)) interacts with ATP. Substrate is bound by residues G87 and 242 to 244 (HDT). D243 acts as the Proton acceptor in catalysis. T265 serves as a coordination point for ATP. N302 is a substrate binding site. Residue Q310 participates in ATP binding. The cysteines at positions 360 and 377 are disulfide-linked. G411 lines the ATP pocket.

It belongs to the rhamnulokinase family. It depends on Mg(2+) as a cofactor.

The catalysed reaction is L-rhamnulose + ATP = L-rhamnulose 1-phosphate + ADP + H(+). It functions in the pathway carbohydrate degradation; L-rhamnose degradation; glycerone phosphate from L-rhamnose: step 2/3. Involved in the catabolism of L-rhamnose (6-deoxy-L-mannose). Catalyzes the transfer of the gamma-phosphate group from ATP to the 1-hydroxyl group of L-rhamnulose to yield L-rhamnulose 1-phosphate. The sequence is that of Rhamnulokinase from Enterococcus faecalis (strain ATCC 700802 / V583).